Consider the following 1310-residue polypeptide: Angiotensin-converting enzyme (1310 aa).

The first 33 residues, 1–33 (MGAAPGRRGPRLLRPPPPLLLLLLLLRPPPAAL), serve as a signal peptide directing secretion. Residues 34–1260 (TLDPGLLPGD…GMNLDAQQAR (1227 aa)) lie on the Extracellular side of the membrane. Peptidase M2 domains are found at residues 45-628 (AADE…LGWP) and 647-1226 (VTDE…LGWP). N-linked (GlcNAc...) asparagine glycosylation is found at N59, N79, and N151. C162 and C170 are joined by a disulfide. Y236 contacts chloride. An N-linked (GlcNAc...) asparagine glycan is attached at N323. C364 and C382 are joined by a disulfide. Residue H395 participates in Zn(2+) binding. E396 functions as the Proton acceptor 1 in the catalytic mechanism. Positions 399 and 422 each coordinate Zn(2+). N-linked (GlcNAc...) asparagine glycans are attached at residues N449 and N513. The Proton donor 1 role is filled by H524. R533 contributes to the chloride binding site. Cysteines 549 and 561 form a disulfide. N-linked (GlcNAc...) asparagine glycosylation is found at N681, N699, and N718. C761 and C767 are disulfide-bonded. Positions 795 and 833 each coordinate chloride. The N-linked (GlcNAc...) asparagine glycan is linked to N946. Cysteines 961 and 979 form a disulfide. H992 contributes to the Zn(2+) binding site. Residue E993 is the Proton acceptor 2 of the active site. H996 and E1020 together coordinate Zn(2+). Residues W1094 and R1098 each contribute to the chloride site. H1122 acts as the Proton donor 2 in catalysis. R1131 lines the chloride pocket. C1147 and C1159 form a disulfide bridge. Residue N1195 is glycosylated (N-linked (GlcNAc...) asparagine). Residues 1219–1260 (HGEKLGWPQYTWTPNSARSEGSLPDSGRVNFLGMNLDAQQAR) are juxtamembrane stalk. Residues 1261–1281 (VGQWVLLFLGVALLLASLGLT) form a helical membrane-spanning segment. Topologically, residues 1282–1310 (QRLFSIRYQSLRQPHHGPQFGSEVELRHS) are cytoplasmic. S1303 is subject to Phosphoserine.

Belongs to the peptidase M2 family. Monomer and homodimer; homodimerizes following binding to an inhibitor. Interacts with calmodulin (CALM1, CALM2 or CALM3); interaction takes place in the cytoplasmic region and regulates phosphorylation and proteolytic cleavage. Zn(2+) is required as a cofactor. The cofactor is chloride. In terms of processing, N-glycosylated. Phosphorylated by CK2 on Ser-1303; which allows membrane retention. Phosphorylated on tyrosine residues on its extracellular part, promoting cleavage by secretase enzymes and formation of the soluble form (Angiotensin-converting enzyme, soluble form). Post-translationally, produced following proteolytic cleavage by secretase enzymes that cleave the transmembrane form in the juxtamembrane stalk region upstream of the transmembrane region. Cleavage can take place at different sites of the juxtamembrane stalk region. Testis-specific isoform is expressed in spermatocytes, adult testis.

It localises to the cell membrane. It is found in the cytoplasm. Its subcellular location is the secreted. It catalyses the reaction Release of a C-terminal dipeptide, oligopeptide-|-Xaa-Yaa, when Xaa is not Pro, and Yaa is neither Asp nor Glu. Thus, conversion of angiotensin I to angiotensin II, with increase in vasoconstrictor activity, but no action on angiotensin II.. It carries out the reaction angiotensin I + H2O = L-histidyl-L-leucine + angiotensin II. The catalysed reaction is bradykinin + H2O = L-Phe-L-Arg + bradykinin(1-7). The enzyme catalyses substance P + H2O = substance P(1-9) + L-Leu-L-Met-NH2. It catalyses the reaction substance P + H2O = substance P(1-8) + Gly-L-Leu-L-Met-NH2. It carries out the reaction substance P + H2O = L-Phe-L-Phe-Gly-L-Leu-L-Met-NH2 + substance P(1-6). The catalysed reaction is neurotensin + H2O = neurotensin(1-11) + L-isoleucyl-L-leucine. The enzyme catalyses goralatide + H2O = N-acetyl-L-seryl-L-aspartate + L-lysyl-L-proline. It catalyses the reaction Met-enkephalin + H2O = L-phenylalanyl-L-methionine + L-tyrosylglycylglycine. It carries out the reaction Leu-enkephalin + H2O = L-tyrosylglycylglycine + L-phenylalanyl-L-leucine. The catalysed reaction is Met-enkephalin-Arg-Phe + H2O = L-arginyl-L-phenylalanine + Met-enkephalin. With respect to regulation, the dipeptidyl carboxypeptidase activity is strongly activated by chloride. Specifically inhibited by lisinopril. Inhibited by mixanpril, an orally-active drug used for the treatment of hypertension. Its activity is regulated as follows. Strongly inhibited by lisinopril and captopril. Dipeptidyl carboxypeptidase that removes dipeptides from the C-terminus of a variety of circulating hormones, such as angiotensin I, bradykinin or enkephalins, thereby playing a key role in the regulation of blood pressure, electrolyte homeostasis or synaptic plasticity. Composed of two similar catalytic domains, each possessing a functional active site, with different selectivity for substrates. Plays a major role in the angiotensin-renin system that regulates blood pressure and sodium retention by the kidney by converting angiotensin I to angiotensin II, resulting in an increase of the vasoconstrictor activity of angiotensin. Also able to inactivate bradykinin, a potent vasodilator, and therefore enhance the blood pressure response. Acts as a regulator of synaptic transmission by mediating cleavage of neuropeptide hormones, such as substance P, neurotensin or enkephalins. Catalyzes degradation of different enkephalin neuropeptides (Met-enkephalin, Leu-enkephalin, Met-enkephalin-Arg-Phe and possibly Met-enkephalin-Arg-Gly-Leu). Acts as a regulator of synaptic plasticity in the nucleus accumbens of the brain by mediating cleavage of Met-enkephalin-Arg-Phe, a strong ligand of Mu-type opioid receptor OPRM1, into Met-enkephalin. Met-enkephalin-Arg-Phe cleavage by ACE decreases activation of OPRM1, leading to long-term synaptic potentiation of glutamate release. Also acts as a regulator of hematopoietic stem cell differentiation by mediating degradation of hemoregulatory peptide N-acetyl-SDKP (AcSDKP). Acts as a regulator of cannabinoid signaling pathway by mediating degradation of hemopressin, an antagonist peptide of the cannabinoid receptor CNR1. Involved in amyloid-beta metabolism by catalyzing degradation of Amyloid-beta protein 40 and Amyloid-beta protein 42 peptides, thereby preventing plaque formation. Catalyzes cleavage of cholecystokinin (maturation of Cholecystokinin-8 and Cholecystokinin-5) and Gonadoliberin-1 (both maturation and degradation) hormones. Degradation of hemoregulatory peptide N-acetyl-SDKP (AcSDKP) and amyloid-beta proteins is mediated by the N-terminal catalytic domain, while angiotensin I and cholecystokinin cleavage is mediated by the C-terminal catalytic region. Functionally, soluble form that is released in blood plasma and other body fluids following proteolytic cleavage in the juxtamembrane stalk region. In terms of biological role, isoform produced by alternative promoter usage that is specifically expressed in spermatocytes and adult testis, and which is required for male fertility. In contrast to somatic isoforms, only contains one catalytic domain. Acts as a dipeptidyl carboxypeptidase that removes dipeptides from the C-terminus of substrates. The identity of substrates that are needed for male fertility is unknown. May also have a glycosidase activity which releases GPI-anchored proteins from the membrane by cleaving the mannose linkage in the GPI moiety. The GPIase activity was reported to be essential for the egg-binding ability of the sperm. This activity is however unclear and has been challenged by other groups, suggesting that it may be indirect. This is Angiotensin-converting enzyme from Oryctolagus cuniculus (Rabbit).